The chain runs to 380 residues: Cytochrome b (380 aa).

A run of 4 helical transmembrane segments spans residues 34-54, 78-99, 114-134, and 179-199; these read FGSL…FLAM, WLIR…YLHI, WNIG…GYVL, and FFTF…VHLL. Heme b is bound by residues His84 and His98. Residues His183 and His197 each contribute to the heme b site. Residue His202 coordinates a ubiquinone. The next 4 helical transmembrane spans lie at 227 to 247, 289 to 309, 321 to 341, and 348 to 368; these read YKDL…ALFT, LGGV…PILH, ISQL…WIGG, and FITI…ILFP.

The protein belongs to the cytochrome b family. In terms of assembly, the cytochrome bc1 complex contains 3 respiratory subunits (MT-CYB, CYC1 and UQCRFS1), 2 core proteins (UQCRC1 and UQCRC2) and probably 6 low-molecular weight proteins. The cofactor is heme b.

It is found in the mitochondrion inner membrane. Component of the ubiquinol-cytochrome c reductase complex (complex III or cytochrome b-c1 complex) that is part of the mitochondrial respiratory chain. The b-c1 complex mediates electron transfer from ubiquinol to cytochrome c. Contributes to the generation of a proton gradient across the mitochondrial membrane that is then used for ATP synthesis. The polypeptide is Cytochrome b (mt-cyb) (Pastinachus sephen (Cowtail stingray)).